A 29-amino-acid chain; its full sequence is Amelogenin-like protein (29 aa).

Phosphoserine is present on S16.

This sequence belongs to the amelogenin family.

The protein resides in the secreted. Its subcellular location is the extracellular space. The protein localises to the extracellular matrix. In terms of biological role, tooth enamel proteins are produced in ameloblasts and play a role in biomineralization. This is Amelogenin-like protein (AMEL) from Oryctolagus cuniculus (Rabbit).